The chain runs to 261 residues: Phosphatidylglycerol--prolipoprotein diacylglyceryl transferase (261 aa).

A run of 7 helical transmembrane segments spans residues 19–39 (VHWY…LALY), 56–76 (LIFY…MLFY), 92–112 (WRGG…TWIF), 126–146 (FVVP…FING), 173–193 (QLYE…WFSA), 199–219 (FAVS…AEFF), and 227–247 (GFVA…MIII). Position 139 (Arg139) interacts with a 1,2-diacyl-sn-glycero-3-phospho-(1'-sn-glycerol).

This sequence belongs to the Lgt family.

It is found in the cell inner membrane. The enzyme catalyses L-cysteinyl-[prolipoprotein] + a 1,2-diacyl-sn-glycero-3-phospho-(1'-sn-glycerol) = an S-1,2-diacyl-sn-glyceryl-L-cysteinyl-[prolipoprotein] + sn-glycerol 1-phosphate + H(+). It functions in the pathway protein modification; lipoprotein biosynthesis (diacylglyceryl transfer). Catalyzes the transfer of the diacylglyceryl group from phosphatidylglycerol to the sulfhydryl group of the N-terminal cysteine of a prolipoprotein, the first step in the formation of mature lipoproteins. This chain is Phosphatidylglycerol--prolipoprotein diacylglyceryl transferase, found in Coxiella burnetii (strain Dugway 5J108-111).